Consider the following 367-residue polypeptide: Molybdenum import ATP-binding protein ModC (367 aa).

Residues 1–234 (MSSAALEVRL…PALSGGFGHE (234 aa)) enclose the ABC transporter domain. Residue 33–40 (GPSGAGKS) participates in ATP binding. A Mop domain is found at 293-366 (HISLHNILPV…IKSVAVDVLG (74 aa)).

This sequence belongs to the ABC transporter superfamily. Molybdate importer (TC 3.A.1.8) family. The complex is composed of two ATP-binding proteins (ModC), two transmembrane proteins (ModB) and a solute-binding protein (ModA).

It localises to the cell inner membrane. The catalysed reaction is molybdate(out) + ATP + H2O = molybdate(in) + ADP + phosphate + H(+). Part of the ABC transporter complex ModABC involved in molybdenum import. Responsible for energy coupling to the transport system. This chain is Molybdenum import ATP-binding protein ModC, found in Granulibacter bethesdensis (strain ATCC BAA-1260 / CGDNIH1).